Reading from the N-terminus, the 953-residue chain is Zinc finger protein 507 (953 aa).

Residue S95 is modified to Phosphoserine. 3 consecutive C2H2-type zinc fingers follow at residues 125–147 (YQCS…IKQH), 155–185 (LMCS…ANIH), and 248–270 (YRCL…AWKH). S427 is modified (phosphoserine). The segment at 470–489 (KGLATDENAPPGRRRTNSES) is disordered. C2H2-type zinc fingers lie at residues 641–663 (YRCR…LRVH), 669–691 (YQCP…MIHH), 697–720 (YQCK…REQH), 758–780 (YRCD…RRIH), and 786–808 (YRCS…MWKH). Residues 831 to 888 (GRVLGKSPGKTQLKSSEESADPVTGSSENAVSSSELMSQTPSEVLGTNENEKLSPTSN) are disordered. Over residues 854–888 (TGSSENAVSSSELMSQTPSEVLGTNENEKLSPTSN) the composition is skewed to polar residues. A C2H2-type 9 zinc finger spans residues 911-933 (FCCCICGFESTSKENLLDHMKEH).

This sequence belongs to the krueppel C2H2-type zinc-finger protein family.

The protein resides in the nucleus. May be involved in transcriptional regulation. The protein is Zinc finger protein 507 (ZNF507) of Homo sapiens (Human).